Consider the following 67-residue polypeptide: Prokaryotic ubiquitin-like protein Pup (67 aa).

Low complexity predominate over residues 1–13 (MAGQEQQQPQSRD). Residues 1–48 (MAGQEQQQPQSRDSQVDEDIPEAPPAPPEAQASASTEGVDDLLDEIDG) are disordered. Residues 25–61 (PAPPEAQASASTEGVDDLLDEIDGVLESNAEEFVRAF) are ARC ATPase binding. Residues 38 to 48 (GVDDLLDEIDG) are compositionally biased toward acidic residues. Glutamine 67 is subject to Deamidated glutamine. Residue glutamine 67 forms an Isoglutamyl lysine isopeptide (Gln-Lys) (interchain with K-? in acceptor proteins) linkage.

Belongs to the prokaryotic ubiquitin-like protein family. Strongly interacts with the proteasome-associated ATPase ARC through a hydrophobic interface; the interacting region of Pup lies in its C-terminal half. There is one Pup binding site per ARC hexamer ring. Is modified by deamidation of its C-terminal glutamine to glutamate by the deamidase Dop, a prerequisite to the subsequent pupylation process.

It functions in the pathway protein degradation; proteasomal Pup-dependent pathway. Its function is as follows. Protein modifier that is covalently attached to lysine residues of substrate proteins, thereby targeting them for proteasomal degradation. The tagging system is termed pupylation. In Pseudarthrobacter chlorophenolicus (strain ATCC 700700 / DSM 12829 / CIP 107037 / JCM 12360 / KCTC 9906 / NCIMB 13794 / A6) (Arthrobacter chlorophenolicus), this protein is Prokaryotic ubiquitin-like protein Pup.